The following is a 62-amino-acid chain: Large ribosomal subunit protein bL32 (62 aa).

A compositionally biased stretch (basic residues) spans 1–19 (MAVPKRKTSKTRRDKRRAS). A disordered region spans residues 1-20 (MAVPKRKTSKTRRDKRRASS).

The protein belongs to the bacterial ribosomal protein bL32 family.

This chain is Large ribosomal subunit protein bL32, found in Finegoldia magna (strain ATCC 29328 / DSM 20472 / WAL 2508) (Peptostreptococcus magnus).